The chain runs to 540 residues: Chaperonin GroEL 2 (540 aa).

Residues T30–P33, K51, D87–T91, G415, N480–L482, and D496 each bind ATP.

The protein belongs to the chaperonin (HSP60) family. As to quaternary structure, forms a cylinder of 14 subunits composed of two heptameric rings stacked back-to-back. Interacts with the co-chaperonin GroES.

It localises to the cytoplasm. The enzyme catalyses ATP + H2O + a folded polypeptide = ADP + phosphate + an unfolded polypeptide.. Functionally, together with its co-chaperonin GroES, plays an essential role in assisting protein folding. The GroEL-GroES system forms a nano-cage that allows encapsulation of the non-native substrate proteins and provides a physical environment optimized to promote and accelerate protein folding. This Protochlamydia amoebophila (strain UWE25) protein is Chaperonin GroEL 2.